The sequence spans 286 residues: Bifunctional protein FolD (286 aa).

NADP(+) contacts are provided by residues 165–167 (GRS), Ser190, and Ile231.

Belongs to the tetrahydrofolate dehydrogenase/cyclohydrolase family. As to quaternary structure, homodimer.

It carries out the reaction (6R)-5,10-methylene-5,6,7,8-tetrahydrofolate + NADP(+) = (6R)-5,10-methenyltetrahydrofolate + NADPH. It catalyses the reaction (6R)-5,10-methenyltetrahydrofolate + H2O = (6R)-10-formyltetrahydrofolate + H(+). It participates in one-carbon metabolism; tetrahydrofolate interconversion. Functionally, catalyzes the oxidation of 5,10-methylenetetrahydrofolate to 5,10-methenyltetrahydrofolate and then the hydrolysis of 5,10-methenyltetrahydrofolate to 10-formyltetrahydrofolate. The protein is Bifunctional protein FolD of Thermodesulfovibrio yellowstonii (strain ATCC 51303 / DSM 11347 / YP87).